A 192-amino-acid chain; its full sequence is UPF0312 protein ECA1782 (192 aa).

A signal peptide spans 1–23 (MLKKTLLSLTAVSMLASAGSALA).

Belongs to the UPF0312 family. Type 1 subfamily.

The protein resides in the periplasm. This is UPF0312 protein ECA1782 from Pectobacterium atrosepticum (strain SCRI 1043 / ATCC BAA-672) (Erwinia carotovora subsp. atroseptica).